The primary structure comprises 2310 residues: Peroxide stress-activated histidine kinase mak2 (2310 aa).

One can recognise a Protein kinase domain in the interval 12 to 292 (DYAISQLGEF…SATDLCYTIV (281 aa)). The 143-residue stretch at 1450–1592 (RLGPLLTTVI…LLSQQIAISV (143 aa)) folds into the GAF domain. Residues 1760–1986 (NMSHELRTPF…TFWFHVQLRN (227 aa)) form the Histidine kinase domain. Phosphohistidine; by autocatalysis is present on His1763. The Response regulatory domain maps to 2180-2303 (YALIAEDNLI…QLVNAVREFV (124 aa)). Asp2232 bears the 4-aspartylphosphate mark.

The protein resides in the cytoplasm. It carries out the reaction ATP + protein L-histidine = ADP + protein N-phospho-L-histidine.. Its function is as follows. Involved in the control of the SAPK-dependent transcriptional response to peroxide stress. Regulates sty1 activity. This Schizosaccharomyces pombe (strain 972 / ATCC 24843) (Fission yeast) protein is Peroxide stress-activated histidine kinase mak2 (mak2).